The primary structure comprises 150 residues: Deoxyuridine 5'-triphosphate nucleotidohydrolase (150 aa).

Substrate-binding positions include 70–72 (RSG), N83, and 87–89 (TID).

It belongs to the dUTPase family. It depends on Mg(2+) as a cofactor.

It carries out the reaction dUTP + H2O = dUMP + diphosphate + H(+). The protein operates within pyrimidine metabolism; dUMP biosynthesis; dUMP from dCTP (dUTP route): step 2/2. Its function is as follows. This enzyme is involved in nucleotide metabolism: it produces dUMP, the immediate precursor of thymidine nucleotides and it decreases the intracellular concentration of dUTP so that uracil cannot be incorporated into DNA. This is Deoxyuridine 5'-triphosphate nucleotidohydrolase from Desulfotalea psychrophila (strain LSv54 / DSM 12343).